Here is a 521-residue protein sequence, read N- to C-terminus: Cytochrome P450 1A1 (521 aa).

Phenylalanine 229 serves as a coordination point for substrate. Position 463 (cysteine 463) interacts with heme.

Belongs to the cytochrome P450 family. Heme serves as cofactor.

Its subcellular location is the endoplasmic reticulum membrane. It localises to the microsome membrane. It catalyses the reaction an organic molecule + reduced [NADPH--hemoprotein reductase] + O2 = an alcohol + oxidized [NADPH--hemoprotein reductase] + H2O + H(+). Functionally, cytochromes P450 are a group of heme-thiolate monooxygenases. They oxidize a variety of structurally unrelated compounds, including steroids, fatty acids, and xenobiotics. This Platichthys flesus (European flounder) protein is Cytochrome P450 1A1 (cyp1a1).